Consider the following 131-residue polypeptide: Large ribosomal subunit protein bL17 (131 aa).

Belongs to the bacterial ribosomal protein bL17 family. Part of the 50S ribosomal subunit. Contacts protein L32.

The sequence is that of Large ribosomal subunit protein bL17 from Shewanella frigidimarina (strain NCIMB 400).